A 392-amino-acid polypeptide reads, in one-letter code: Aryl-hydrocarbon-interacting protein-like 1 (392 aa).

The 93-residue stretch at 53–145 folds into the PPIase FKBP-type domain; sequence RQVDQPMHII…DLDELQKEPQ (93 aa). TPR repeat units follow at residues 178 to 211, 230 to 263, and 264 to 297; these read VPVL…LRNL, NTLT…HPGI, and VKAY…EPSM. A disordered region spans residues 329–392; the sequence is QGATQPPAEP…PLSPGHSLQH (64 aa). 2 stretches are compositionally biased toward pro residues: residues 335-346 and 355-366; these read PAEPPAQPPTAP and PADPPAEPPTAP.

Interacts with NUB1.

The protein resides in the cytoplasm. It localises to the nucleus. May be important in protein trafficking and/or protein folding and stabilization. In Macaca mulatta (Rhesus macaque), this protein is Aryl-hydrocarbon-interacting protein-like 1 (AIPL1).